The chain runs to 575 residues: uncharacterized protein (575 aa).

An N-terminal signal peptide occupies residues 1–28 (MSNLLWKSLVVSPAVLGATLLVSSAAIA). Residues 87-151 (SVSQFSDVQP…DRVNELIATA (65 aa)) form the SLH domain. The stretch at 158–196 (KQDLATLQRLQEEFSAELATLRGRVDALEARTAELEANQ) forms a coiled coil.

This sequence belongs to the OprB family.

This is an uncharacterized protein from Nostoc sp. (strain PCC 7120 / SAG 25.82 / UTEX 2576).